We begin with the raw amino-acid sequence, 475 residues long: MSPKTETKASAGFKAGVKDYRLTYYTPDYETLATDILAAFRVTPQPGVPPEEAGAAVAAESSTGTWTTVWTDGLTSLDRYKGRCYHIEPVAGEENQYIAYVAYPLDLFEEGSVTNMFTSIVGNVFGFKALRALRLEDLRIPPAYSKSFQGPPHGIQVERDKLNKYGRPLLGCTIKPKLGLSAKNYGRAVYECLRGGLDFTKDDENVNSQPFMRWRDRFLFCAEALYKAQAETGEIKGHYLNATAGTCEEMMKRAVFARELGVPIVMHDYLTGGFTANTSLAHYCRDNGLLLHIHRAMHAVIDRQRNHGIHFRVLAKALRMSGGDHIHAGTVVGKLEGERDVTLGFVDLLRDDFIEKDRSRGIYFTQDWVSMPGVLPVASGGIHVWHMPALTEIFGDDSVLQFGGGTLGHPWGNAPGAVANRVALEACVQARNEGRDLAREGNEVIREASRWSPELAAACEVWKEIKFEFEAMDVL.

Positions 1–2 (MS) are excised as a propeptide. Proline 3 carries the post-translational modification N-acetylproline. Lysine 14 is subject to N6,N6,N6-trimethyllysine. Substrate is bound by residues asparagine 123 and threonine 173. Lysine 175 (proton acceptor) is an active-site residue. A substrate-binding site is contributed by lysine 177. Mg(2+)-binding residues include lysine 201, aspartate 203, and glutamate 204. Position 201 is an N6-carboxylysine (lysine 201). Catalysis depends on histidine 294, which acts as the Proton acceptor. The substrate site is built by arginine 295, histidine 327, and serine 379.

Belongs to the RuBisCO large chain family. Type I subfamily. In terms of assembly, heterohexadecamer of 8 large chains and 8 small chains; disulfide-linked. The disulfide link is formed within the large subunit homodimers. It depends on Mg(2+) as a cofactor. In terms of processing, the disulfide bond which can form in the large chain dimeric partners within the hexadecamer appears to be associated with oxidative stress and protein turnover.

It localises to the plastid. It is found in the chloroplast. The catalysed reaction is 2 (2R)-3-phosphoglycerate + 2 H(+) = D-ribulose 1,5-bisphosphate + CO2 + H2O. It carries out the reaction D-ribulose 1,5-bisphosphate + O2 = 2-phosphoglycolate + (2R)-3-phosphoglycerate + 2 H(+). RuBisCO catalyzes two reactions: the carboxylation of D-ribulose 1,5-bisphosphate, the primary event in carbon dioxide fixation, as well as the oxidative fragmentation of the pentose substrate in the photorespiration process. Both reactions occur simultaneously and in competition at the same active site. The sequence is that of Ribulose bisphosphate carboxylase large chain from Amborella trichopoda.